Consider the following 339-residue polypeptide: Phosphoribosylformylglycinamidine cyclo-ligase (339 aa).

Belongs to the AIR synthase family.

The protein localises to the cytoplasm. The catalysed reaction is 2-formamido-N(1)-(5-O-phospho-beta-D-ribosyl)acetamidine + ATP = 5-amino-1-(5-phospho-beta-D-ribosyl)imidazole + ADP + phosphate + H(+). Its pathway is purine metabolism; IMP biosynthesis via de novo pathway; 5-amino-1-(5-phospho-D-ribosyl)imidazole from N(2)-formyl-N(1)-(5-phospho-D-ribosyl)glycinamide: step 2/2. In Streptococcus thermophilus (strain ATCC BAA-250 / LMG 18311), this protein is Phosphoribosylformylglycinamidine cyclo-ligase.